The following is a 390-amino-acid chain: Galactokinase (390 aa).

Substrate is bound at residue 33–36 (EHTD). ATP is bound by residues serine 67 and 124–130 (GAGLSSS). Serine 130 and glutamate 162 together coordinate Mg(2+). The active-site Proton acceptor is aspartate 174. Substrate is bound at residue tyrosine 224.

It belongs to the GHMP kinase family. GalK subfamily.

The protein resides in the cytoplasm. The enzyme catalyses alpha-D-galactose + ATP = alpha-D-galactose 1-phosphate + ADP + H(+). It functions in the pathway carbohydrate metabolism; galactose metabolism. In terms of biological role, catalyzes the transfer of the gamma-phosphate of ATP to D-galactose to form alpha-D-galactose-1-phosphate (Gal-1-P). This is Galactokinase from Bacillus subtilis (strain 168).